Here is a 329-residue protein sequence, read N- to C-terminus: Glycerol-3-phosphate dehydrogenase [NAD(P)+] (329 aa).

NADPH contacts are provided by Ser13, Trp14, His34, and Lys105. Residues Lys105, Gly134, and Ser136 each contribute to the sn-glycerol 3-phosphate site. Ala138 contacts NADPH. Sn-glycerol 3-phosphate contacts are provided by Lys189, Asp242, Ser252, Arg253, and Asn254. Lys189 (proton acceptor) is an active-site residue. An NADPH-binding site is contributed by Arg253. Val277 and Glu279 together coordinate NADPH.

The protein belongs to the NAD-dependent glycerol-3-phosphate dehydrogenase family.

The protein localises to the cytoplasm. It catalyses the reaction sn-glycerol 3-phosphate + NAD(+) = dihydroxyacetone phosphate + NADH + H(+). The enzyme catalyses sn-glycerol 3-phosphate + NADP(+) = dihydroxyacetone phosphate + NADPH + H(+). The protein operates within membrane lipid metabolism; glycerophospholipid metabolism. In terms of biological role, catalyzes the reduction of the glycolytic intermediate dihydroxyacetone phosphate (DHAP) to sn-glycerol 3-phosphate (G3P), the key precursor for phospholipid synthesis. This Legionella pneumophila (strain Corby) protein is Glycerol-3-phosphate dehydrogenase [NAD(P)+].